Reading from the N-terminus, the 350-residue chain is Hydroxymethylglutaryl-CoA synthase (350 aa).

Glu-83 serves as the catalytic Proton donor/acceptor. The Acyl-thioester intermediate role is filled by Cys-115. Cys-115 and Thr-156 together coordinate (3S)-3-hydroxy-3-methylglutaryl-CoA. Arg-204 is a CoA binding site. (3S)-3-hydroxy-3-methylglutaryl-CoA-binding residues include Thr-206 and His-239. The active-site Proton donor/acceptor is the His-239. Lys-244 contributes to the CoA binding site. Residues Asn-271 and Ser-301 each coordinate (3S)-3-hydroxy-3-methylglutaryl-CoA.

Belongs to the thiolase-like superfamily. Archaeal HMG-CoA synthase family. Interacts with acetoacetyl-CoA thiolase that catalyzes the precedent step in the pathway and with a DUF35 protein. The acetoacetyl-CoA thiolase/HMG-CoA synthase complex channels the intermediate via a fused CoA-binding site, which allows for efficient coupling of the endergonic thiolase reaction with the exergonic HMGCS reaction.

The enzyme catalyses acetoacetyl-CoA + acetyl-CoA + H2O = (3S)-3-hydroxy-3-methylglutaryl-CoA + CoA + H(+). Its pathway is metabolic intermediate biosynthesis; (R)-mevalonate biosynthesis; (R)-mevalonate from acetyl-CoA: step 2/3. Its function is as follows. Catalyzes the condensation of acetyl-CoA with acetoacetyl-CoA to form 3-hydroxy-3-methylglutaryl-CoA (HMG-CoA). Functions in the mevalonate (MVA) pathway leading to isopentenyl diphosphate (IPP), a key precursor for the biosynthesis of isoprenoid compounds that are building blocks of archaeal membrane lipids. This is Hydroxymethylglutaryl-CoA synthase from Pyrococcus furiosus (strain ATCC 43587 / DSM 3638 / JCM 8422 / Vc1).